The sequence spans 225 residues: Protein-L-isoaspartate O-methyltransferase (225 aa).

Ser-75 is a catalytic residue.

It belongs to the methyltransferase superfamily. L-isoaspartyl/D-aspartyl protein methyltransferase family.

Its subcellular location is the cytoplasm. The catalysed reaction is [protein]-L-isoaspartate + S-adenosyl-L-methionine = [protein]-L-isoaspartate alpha-methyl ester + S-adenosyl-L-homocysteine. Catalyzes the methyl esterification of L-isoaspartyl residues in peptides and proteins that result from spontaneous decomposition of normal L-aspartyl and L-asparaginyl residues. It plays a role in the repair and/or degradation of damaged proteins. The chain is Protein-L-isoaspartate O-methyltransferase from Xanthomonas campestris pv. campestris (strain 8004).